The chain runs to 96 residues: Elicitor peptide 3 (96 aa).

Positions 1 to 73 (MENLRNGEDN…EEEEEDGMTI (73 aa)) are excised as a propeptide. The segment at 32–96 (SGLESSSSSS…PSSGKGGKHN (65 aa)) is disordered. The segment covering 35 to 49 (ESSSSSSSSCDLSSS) has biased composition (low complexity). The segment covering 52 to 71 (EEDESIDIKEEEEEEEEDGM) has biased composition (acidic residues).

It belongs to the brassicaceae elicitor peptide family.

Elicitor of plant defense. The sequence is that of Elicitor peptide 3 (PEP3) from Arabidopsis thaliana (Mouse-ear cress).